Reading from the N-terminus, the 493-residue chain is Geraniol 8-hydroxylase (493 aa).

Topologically, residues 1–6 (MDYLTI) are lumenal. Residues 7 to 23 (ILTLLFALTLYEAFSYL) form a helical membrane-spanning segment. At 24-493 (SRRTKNLPPG…HPLRAVPSTL (470 aa)) the chain is on the cytoplasmic side. C436 serves as a coordination point for heme.

Belongs to the cytochrome P450 family. It depends on heme as a cofactor. In terms of tissue distribution, expressed in roots, stems, leaves and flower buds. Hardly detected in mature flowers and fruits. Expressed in the internal phloem-associated parenchyma.

It is found in the endoplasmic reticulum membrane. It carries out the reaction (2E)-geraniol + reduced [NADPH--hemoprotein reductase] + O2 = (6E)-8-hydroxygeraniol + oxidized [NADPH--hemoprotein reductase] + H2O + H(+). Functionally, hydroxylase involved in the biosynthesis of hydroxygeraniol, a precursor of the terpenoid indole alkaloids such as vinblastine and vincristine. Also able to hydroxylate in vitro nerol and to catalyze 3'-hydroxylation of the flavanone naringenin to form eriodictyol. No activity with apigenin, kaempferol, p-coumaric acid and ferulic acid as substrates. The protein is Geraniol 8-hydroxylase (CYP76B6) of Catharanthus roseus (Madagascar periwinkle).